We begin with the raw amino-acid sequence, 445 residues long: Ribosomal protein uS12 methylthiotransferase RimO (445 aa).

The MTTase N-terminal domain occupies 4–119; it reads LKFGLVSLGC…LDDAIEDFFN (116 aa). Positions 13, 48, 82, 156, 160, and 163 each coordinate [4Fe-4S] cluster. Positions 142 to 372 constitute a Radical SAM core domain; that stretch reads TTGEYSSYVR…MLIQQQVSKN (231 aa). The TRAM domain maps to 375–441; that stretch reads AKKIGKVYKV…EYDLIGVVYN (67 aa).

Belongs to the methylthiotransferase family. RimO subfamily. It depends on [4Fe-4S] cluster as a cofactor.

It is found in the cytoplasm. The enzyme catalyses L-aspartate(89)-[ribosomal protein uS12]-hydrogen + (sulfur carrier)-SH + AH2 + 2 S-adenosyl-L-methionine = 3-methylsulfanyl-L-aspartate(89)-[ribosomal protein uS12]-hydrogen + (sulfur carrier)-H + 5'-deoxyadenosine + L-methionine + A + S-adenosyl-L-homocysteine + 2 H(+). In terms of biological role, catalyzes the methylthiolation of an aspartic acid residue of ribosomal protein uS12. The sequence is that of Ribosomal protein uS12 methylthiotransferase RimO from Clostridium acetobutylicum (strain ATCC 824 / DSM 792 / JCM 1419 / IAM 19013 / LMG 5710 / NBRC 13948 / NRRL B-527 / VKM B-1787 / 2291 / W).